A 298-amino-acid polypeptide reads, in one-letter code: GPN-loop GTPase QQT1 (298 aa).

12 to 17 (GSGKTT) is a binding site for GTP. The Gly-Pro-Asn (GPN)-loop; involved in dimer interface motif lies at 69-71 (GPN). Residue 173–176 (SKID) coordinates GTP.

Belongs to the GPN-loop GTPase family. As to quaternary structure, heterodimer with QQT2. In terms of tissue distribution, expressed in vascular tissues, root tips, apical and root meristematic regions, and floral primordia.

The protein resides in the cytoplasm. The protein localises to the nucleus. Its subcellular location is the cytoskeleton. It localises to the spindle. It is found in the phragmoplast. Small GTPase that is essential for the correct formation of the tangential divisions in early embryos. Associates with microtubule during mitosis and may function in the positioning of the division plane. May participate in the patterning of the early embryo at the octant-dermatogen transition. Is crucial for normal development of the plant. The sequence is that of GPN-loop GTPase QQT1 from Arabidopsis thaliana (Mouse-ear cress).